The following is a 315-amino-acid chain: MRTYSNKLIAIMSVLLLACLIVSGCSSSQNNNGSGKSESKDSRVIHDEEGKTTVSGTPKRVVVLELSFLDAVHNLGITPVGIADDNKKDMIKKLVGSSIDYTSVGTRSEPNLEVISSLKPDLIIADAERHKNIYKQLKKIAPTIELKSREATYDETIDSFTTIAKALNKEDEGKEKLAEHKKVINDLKAELPKDENRNIVLGVARADSFQLHTSSSYDGEIFKMLGFTHAVKSDNAYQEVSLEQLSKIDPDILFISANEGKTIVDEWKTNPLWKNLKAVKNGQVYDADRDTWTRFRGIKSSETSAKDVLKKVYNK.

The first 18 residues, 1 to 18 (MRTYSNKLIAIMSVLLLA), serve as a signal peptide directing secretion. C19 carries the N-palmitoyl cysteine lipid modification. C19 carries S-diacylglycerol cysteine lipidation. Positions 27–36 (SSQNNNGSGK) are enriched in low complexity. The interval 27-52 (SSQNNNGSGKSESKDSRVIHDEEGKT) is disordered. The span at 37–51 (SESKDSRVIHDEEGK) shows a compositional bias: basic and acidic residues. The Fe/B12 periplasmic-binding domain maps to 60–315 (RVVVLELSFL…KDVLKKVYNK (256 aa)).

The protein belongs to the bacterial solute-binding protein 8 family. The complex is composed of one ATP-binding protein (YfmF), two transmembrane proteins (YfmD and YfmE) and a solute-binding protein (YfmC).

The protein resides in the cell membrane. Part of the ABC transporter complex YfmCDEF involved in citrate-dependent Fe(3+) import. Binds citrate-dependent Fe(3+) and delivers it to the surface of YfmDE. This is Fe(3+)-citrate-binding protein YfmC (yfmC) from Bacillus subtilis (strain 168).